We begin with the raw amino-acid sequence, 249 residues long: uncharacterized protein (249 aa).

The first 36 residues, 1–36, serve as a signal peptide directing secretion; sequence MAKSPARRCTAKVRRVLSRSVLILCWSLLGAAPAHA. Positions 227-249 are disordered; the sequence is ARQPPGRWVCPSSAGGPIGWHRQ.

This is an uncharacterized protein from Mycobacterium tuberculosis (strain CDC 1551 / Oshkosh).